Here is a 555-residue protein sequence, read N- to C-terminus: Sulfite reductase [ferredoxin] (555 aa).

Residues Met1–Pro22 form a disordered region. Residues Tyr69–Cys161 constitute a cross-link (3'-(S-cysteinyl)-tyrosine (Tyr-Cys)). [4Fe-4S] cluster contacts are provided by Cys417, Cys423, Cys463, and Cys467. Cys467 serves as a coordination point for siroheme.

This sequence belongs to the nitrite and sulfite reductase 4Fe-4S domain family. As to quaternary structure, monomer. Siroheme is required as a cofactor. It depends on [4Fe-4S] cluster as a cofactor.

It catalyses the reaction hydrogen sulfide + 6 oxidized [2Fe-2S]-[ferredoxin] + 3 H2O = sulfite + 6 reduced [2Fe-2S]-[ferredoxin] + 7 H(+). Catalyzes the reduction of sulfite to sulfide, a step in the biosynthesis of sulfur-containing amino acids and cofactors. This Mycobacterium bovis (strain ATCC BAA-935 / AF2122/97) protein is Sulfite reductase [ferredoxin] (sir).